Here is a 902-residue protein sequence, read N- to C-terminus: MAQESDLSKTADKGKGKAVDDEKKHQDVDGKTPANGKKEEEQNASEELSEEDQQLKSELEMLVERLTESDATLYKPALEAMKNSIKTSTSSMTAVPKPLKFLRPHYETMTKLYDEWPAGDDKSSLADVLSVIGMTYSDEDRQDTLKYRLLSPTQDIGSWGHEYVRHLALEIGEVYAKRIANDEPTQELVDLALVLVPLFLKSNAEADAVDLMSELEIIEELPKFLDENTYSRVCLYMVSMVNLLTYPDNETFLRVAHSIYKKYNQHTQAMVLAIRLNDLGLIEKDFEAADEDPALRKQLAFLIARQGIPLEFERSNDDDEKIYECLSNQKLSEYFKSLGKELNILEPKTTEDIYKSHLESSRVAGMTNFDSARHNLAAGFVNAFVNAGFGSDKMMLVGKDKDSWVWKTKDEGMMSTVASLGTLLLWDVENGLDHVDKYTYLEEEQIQAGAYLAIGIMNTNVRTDSEPAMALLADPDKLAHKNPLIRVATIMGLGLAYAGSCKEELLSFLVNIISDPEESMQVSAMAALACGMIFVGSSNSEVSEAIVTTLLDEESGSRLNDKWSRFLALGLGLLYFGRQEQVDVILETLKAVEHPMAKPTAVLAEICAWAGTGAVLKIQELLHICNEHIEDGEEKKGEELLQAYAVLGIGLIAMGEDVGQEMVLRHFGHLMHYGEANIRRAVPLAMGLISPSNPQMKVYDTLSRYSHDNDNEVAINAIFAMGLLGAGTNNARLAQLLRQLASYYHRDQESLFMVRIAQGLLHMGKGTLSVSPFHTDRQVLSNVATAGLLAVLVAMIDAKQFITSKSHYLLYWIVTAMHPRMLVTLDEDLKPLTVNVRVGQAVDVVGQAGRPKTITGWQTQSTPVLLGYGERAELEDDQYISLSSTLEGLVILRKNPDWEGEK.

The span at 1-41 shows a compositional bias: basic and acidic residues; it reads MAQESDLSKTADKGKGKAVDDEKKHQDVDGKTPANGKKEEE. The disordered stretch occupies residues 1–54; that stretch reads MAQESDLSKTADKGKGKAVDDEKKHQDVDGKTPANGKKEEEQNASEELSEEDQQ. Positions 42–52 are enriched in acidic residues; it reads QNASEELSEED. PC repeat units lie at residues 415–448, 449–487, 488–522, 525–559, 568–601, 645–680, 681–715, and 716–750; these read STVASLGTLLLWDVENGLDHVDKYTYLEEEQIQA, GAYLAIGIMNTNVRTDSEPAMALLADPDKLAHKNPLIRV, ATIMGLGLAYAGSCKEELLSFLVNIISDPEESMQV, MAALACGMIFVGSSNSEVSEAIVTTLLDEESGSRL, ALGLGLLYFGRQEQVDVILETLKAVEHPMAKPTA, AVLGIGLIAMGEDVGQEMVLRHFGHLMHYGEANIRR, AVPLAMGLISPSNPQMKVYDTLSRYSHDNDNEVAI, and NAIFAMGLLGAGTNNARLAQLLRQLASYYHRDQES.

It belongs to the proteasome subunit S2 family.

Acts as a regulatory subunit of the 26 proteasome which is involved in the ATP-dependent degradation of ubiquitinated proteins. The sequence is that of 26S proteasome regulatory subunit rpn-1 (rpn-1) from Neurospora crassa (strain ATCC 24698 / 74-OR23-1A / CBS 708.71 / DSM 1257 / FGSC 987).